The sequence spans 119 residues: Acidic phospholipase A2 E (119 aa).

7 disulfides stabilise this stretch: Cys-11-Cys-71, Cys-26-Cys-118, Cys-28-Cys-44, Cys-43-Cys-99, Cys-50-Cys-92, Cys-60-Cys-85, and Cys-78-Cys-90. Residues Tyr-27, Gly-29, and Gly-31 each coordinate Ca(2+). The active site involves His-47. Residue Asp-48 participates in Ca(2+) binding. The active site involves Asp-93.

It belongs to the phospholipase A2 family. Group I subfamily. D49 sub-subfamily. Requires Ca(2+) as cofactor. In terms of tissue distribution, expressed by the venom gland.

Its subcellular location is the secreted. The catalysed reaction is a 1,2-diacyl-sn-glycero-3-phosphocholine + H2O = a 1-acyl-sn-glycero-3-phosphocholine + a fatty acid + H(+). PLA2 catalyzes the calcium-dependent hydrolysis of the 2-acyl groups in 3-sn-phosphoglycerides. This Naja oxiana (Central Asian cobra) protein is Acidic phospholipase A2 E.